The following is a 737-amino-acid chain: tRNA (guanine(27)-N(2))-dimethyltransferase (737 aa).

Residues methionine 1–leucine 10 show a composition bias toward acidic residues. Residues methionine 1–leucine 65 form a disordered region. Over residues valine 17–proline 49 the composition is skewed to low complexity. Threonine 24 bears the Phosphothreonine mark. The segment covering alanine 50–alanine 62 has biased composition (pro residues). A Phosphoserine modification is found at serine 72. The short motif at histidine 141–arginine 145 is the Nucleolar localization signal element. The segment at tyrosine 190–histidine 212 adopts a C2H2-type zinc-finger fold. A Trm1 methyltransferase domain is found at glutamate 233 to leucine 692. The S-adenosyl-L-methionine site is built by arginine 266, aspartate 313, aspartate 363, and alanine 364. Zn(2+) is bound by residues cysteine 494, cysteine 497, cysteine 519, and cysteine 521. A Glycyl lysine isopeptide (Lys-Gly) (interchain with G-Cter in SUMO2) cross-link involves residue lysine 589. Serine 616 carries the phosphoserine modification.

Belongs to the class I-like SAM-binding methyltransferase superfamily. Trm1 family.

The protein localises to the nucleus. It is found in the nucleolus. The catalysed reaction is guanosine(27) in tRNA(Tyr) + 2 S-adenosyl-L-methionine = N(2)-dimethylguanosine(27) in tRNA(Tyr) + 2 S-adenosyl-L-homocysteine + 2 H(+). Its function is as follows. Specifically dimethylates a single guanine residue at position 27 of tRNA(Tyr) using S-adenosyl-L-methionine as donor of the methyl groups. Dimethylation at position 27 of tRNA(Tyr) is required for efficient translation of tyrosine codons. Also required to maintain 3-(3-amino-3-carboxypropyl)uridine (acp3U) in the D-loop of several cytoplasmic tRNAs. The sequence is that of tRNA (guanine(27)-N(2))-dimethyltransferase (TRMT1L) from Bos taurus (Bovine).